The following is a 138-amino-acid chain: Oleosin G (138 aa).

3 helical membrane-spanning segments follow: residues 14-34 (ILGF…TGLT), 48-68 (VLIF…VAVA), and 69-89 (GFLS…WLYN). The Proline-knot motif lies at 47–58 (PVLIFFSPILIP).

It belongs to the oleosin family. As to expression, expressed in megagametophytes (at protein level).

It localises to the lipid droplet. It is found in the membrane. The polypeptide is Oleosin G (Pinus massoniana (Chinese red pine)).